A 1483-amino-acid chain; its full sequence is Heme-responsive zinc finger transcription factor HAP1 (1483 aa).

The segment covering 1 to 50 has biased composition (polar residues); that stretch reads MSNTPYNSSVPSIASMTQSSVSRSPNMHTATTPGANTSSNSPPLHMSSDS. The segment at 1 to 56 is disordered; it reads MSNTPYNSSVPSIASMTQSSVSRSPNMHTATTPGANTSSNSPPLHMSSDSSKIKRK. The Zn(2+) site is built by Cys64, Cys67, Cys74, Cys81, Cys84, and Cys93. Residues 64–93 constitute a DNA-binding region (zn(2)-C6 fungal-type); that stretch reads CTICRKRKVKCDKLRPHCQQCTKTGVAHLC. Positions 105–134 form a coiled coil; sequence EKELLKDNELKKLRERVKSLEKTLSKVHSS. Over residues 162–176 the composition is skewed to polar residues; the sequence is VNANTGSASSASHMH. The segment at 162–208 is disordered; sequence VNANTGSASSASHMHQQQQQQQQQEQQQDFSRSANANANSSSLSISN. Over residues 177–208 the composition is skewed to low complexity; sequence QQQQQQQQQEQQQDFSRSANANANSSSLSISN. Positions 244 to 444 are heme-responsive; required for HMC formation; the sequence is KGDPYLKLLW…NTIPHHQPQS (201 aa). HRM repeat units follow at residues 280–285, 299–304, 323–328, 347–352, 389–394, and 415–420; these read KCPINH, KCPVDH, RCPVDH, and RCPIDH. Polar residues-rich tracts occupy residues 432–447 and 706–734; these read STHN…SGSH and QLNA…NPTL. 2 disordered regions span residues 432–458 and 706–767; these read STHN…NRKH and QLNA…KENQ. The segment covering 735 to 759 has biased composition (low complexity); the sequence is NNNMSAATTNSSSRSGSADSRSGSN. The HRM 7 repeat unit spans residues 1192 to 1197; sequence KCPVYQ. Disordered regions lie at residues 1266–1289 and 1386–1411; these read DGYI…SNGL and NTDT…ASNS. Positions 1388–1411 are enriched in polar residues; the sequence is DTSANGSALSTLTSPQGSDLASNS.

In terms of assembly, binds DNA as a homodimer. Interacts with SRO9 and YDJ1. In the absence of heme, binds to at least four cellular proteins, including YDJ1 and SRO9, forming a high-molecular-weight complex (HMC) which results in repression of its activity and dictates its DNA-binding specificity.

Its subcellular location is the nucleus. Its function is as follows. Regulation of oxygen dependent gene expression. It modulates the expression of Iso-1 (CYP1) and Iso-2 (CYP3) cytochrome c. In response to heme, promotes transcription of genes encoding functions required for respiration, controlling oxidative damage and repression of anaerobic genes. Binds to the sequence 5'-CGGNNNTNNCGG-3'. The protein is Heme-responsive zinc finger transcription factor HAP1 (HAP1) of Saccharomyces cerevisiae (strain JAY291) (Baker's yeast).